A 607-amino-acid chain; its full sequence is Elongation factor 4 (607 aa).

Residues 11-193 (SKIRNFSIIA…QIVEKVPAPT (183 aa)) form the tr-type G domain. GTP is bound by residues 23 to 28 (DHGKST) and 140 to 143 (NKID).

The protein belongs to the TRAFAC class translation factor GTPase superfamily. Classic translation factor GTPase family. LepA subfamily.

It is found in the cell membrane. The enzyme catalyses GTP + H2O = GDP + phosphate + H(+). Its function is as follows. Required for accurate and efficient protein synthesis under certain stress conditions. May act as a fidelity factor of the translation reaction, by catalyzing a one-codon backward translocation of tRNAs on improperly translocated ribosomes. Back-translocation proceeds from a post-translocation (POST) complex to a pre-translocation (PRE) complex, thus giving elongation factor G a second chance to translocate the tRNAs correctly. Binds to ribosomes in a GTP-dependent manner. This is Elongation factor 4 from Bacillus mycoides (strain KBAB4) (Bacillus weihenstephanensis).